Reading from the N-terminus, the 553-residue chain is Formate--tetrahydrofolate ligase (553 aa).

Residue 63-70 (TPAGEGKT) coordinates ATP.

It belongs to the formate--tetrahydrofolate ligase family.

The enzyme catalyses (6S)-5,6,7,8-tetrahydrofolate + formate + ATP = (6R)-10-formyltetrahydrofolate + ADP + phosphate. It participates in one-carbon metabolism; tetrahydrofolate interconversion. In Oenococcus oeni (strain ATCC BAA-331 / PSU-1), this protein is Formate--tetrahydrofolate ligase.